The primary structure comprises 1217 residues: MMSLSVRPQRRLLSARVSRSQSFAGVLGSQERGPRNFTVFSPPGPQRKPLVLSRVSRMFSVAHPAPKVPQPERLDLVYAALKRGLTAYLEVHQQEQEKLQRQIKESKRNSRLGFLYDLDKQVKSIERFLRRLEFHASKIDELYEAYCVQRRLRDGAYNMVRAYSTGSPGSREARDSLAEATRGHREYTESMCLLENELEAQLGEFHLRMKGLAGFARLCVGDQYEICMKYGRQRWKLRGRIESSGKQVWDSEETVFLPLLTEFLSIKVTELKGLANHVVVGSVSCETKDLFAALPQVVAVDINDLGTIKLSLEVIWSPFDKDDQPSAASTVNKASTVTKRFSTYSQSPPDTPSLREQAFYNMLRRQEELENGTAWSLSSESSDDSSSPQLSGTARYSSTPKPLVQQPEPLPVQVTFRRPESLSSGSMDEEPPLTPALVNGHAPYSRTLSHISEASVDAALTEAMEAVDLKCPAPGPSPLVYPESTHVEHVSSVPPVADNGRSATSPALSTAGPAPTFIDPASSTQLDLVHKATDSGSSELPSITHTMASSTYSAVSPINSVPGLTSTTVGSTHKPMPSPLTSTGSIPSVTDSIQTTTSPTHTTPSPTHTTVSPTHSTPSPTHTTVSPSNAALSPSNATPSLSHSTTSPTQKATMSTHTTSAVGPVQTTTSPISTTVSPSPSVDTAIISSSSAVPSVPGPEARPCSHPTSTPYTKADPTAACTSSPSLASSGPKPLTSPAPDSLEQILKSPSSSPSSIVPEPQRSELSLALVAQAPVPEATGGAGDRRLEEALRTLMAALDDYRGQFPELQGLEQEVTRLESLLMQRQGLTRSRASSLSITVEHALESFSFLNDDEDEDNDSPGDRPTSSPEVVAEERLDSSNAQCLSTGCSALDATLVQHLYHCSCLLLKLGTFGPLRCQEAWALERLLREARVLQEVCEHSKLWGNAVTSAQEVVQFSASRPGFLTFWDQCTEGLNPFLCPVEQVLLTFCSQYGARLSLRQPGLAEAVCVKFLEDALGQKLPRRPHSGPGEQLTIFQFWSYVEVLDSPSMEAYVTETAEEVLLVQNLNSDDQAVVLKALRLAPEGRLRKDGLRALSSLLVHGNSKVMAAVSTQLRSLSLGPVFRERALLCFLDQLEDEDVQTRVAGCLALGCIKAPEGIEPLVYLCQTDTEAVREAARQSLQQCGEEGQSAHRQLEESLDALPCLFGPSSMASTAF.

Ser22 carries the post-translational modification Phosphoserine. Residues 83–112 adopt a coiled-coil conformation; sequence RGLTAYLEVHQQEQEKLQRQIKESKRNSRL. Ser345 and Ser347 each carry phosphoserine. Thr351 bears the Phosphothreonine mark. Positions 371 to 413 are disordered; that stretch reads NGTAWSLSSESSDDSSSPQLSGTARYSSTPKPLVQQPEPLPVQ. Low complexity-rich tracts occupy residues 376-391 and 400-413; these read SLSS…PQLS and PKPL…LPVQ. Ser452 and Ser455 each carry phosphoserine. A disordered region spans residues 565 to 762; that stretch reads TSTTVGSTHK…SPSSIVPEPQ (198 aa). A compositionally biased stretch (polar residues) spans 579–594; sequence PLTSTGSIPSVTDSIQ. Low complexity predominate over residues 595–649; that stretch reads TTTSPTHTTPSPTHTTVSPTHSTPSPTHTTVSPSNAALSPSNATPSLSHSTTSPT. Residues 650-661 show a composition bias toward polar residues; the sequence is QKATMSTHTTSA. The span at 664 to 695 shows a compositional bias: low complexity; the sequence is PVQTTTSPISTTVSPSPSVDTAIISSSSAVPS. Positions 720-729 are enriched in polar residues; the sequence is ACTSSPSLAS. Position 742 is a phosphoserine (Ser742). Residues 786 to 828 are a coiled coil; sequence RRLEEALRTLMAALDDYRGQFPELQGLEQEVTRLESLLMQRQG. A disordered region spans residues 850–874; sequence FLNDDEDEDNDSPGDRPTSSPEVVA. Residues 852–861 are compositionally biased toward acidic residues; it reads NDDEDEDNDS. Phosphoserine is present on residues Ser868 and Ser869.

This sequence belongs to the RIPOR family. In terms of assembly, interacts (via N-terminus) with RHOA (GTP-bound form); this interaction links active RHOA to STK24 and STK26 kinases. Interacts with RHOB. Interacts with RHOC. Interacts (via C-terminus) with PDCD10; this interaction occurs in a Rho-independent manner. Interacts (via C-terminus) with STK24; this interaction occurs in a PDCD10-dependent and Rho-independent manner. Interacts (via C-terminus) with STK26; this interaction occurs in a PDCD10-dependent and Rho-independent manner. Interacts (via N-terminus) with 14-3-3 proteins; these interactions occur in a Rho-dependent manner.

The protein localises to the cytoplasm. The protein resides in the golgi apparatus. Downstream effector protein for Rho-type small GTPases that plays a role in cell polarity and directional migration. Acts as an adapter protein, linking active Rho proteins to STK24 and STK26 kinases, and hence positively regulates Golgi reorientation in polarized cell migration upon Rho activation. Involved in the subcellular relocation of STK26 from the Golgi to cytoplasm punctae in a Rho- and PDCD10-dependent manner upon serum stimulation. This chain is Rho family-interacting cell polarization regulator 1, found in Rattus norvegicus (Rat).